We begin with the raw amino-acid sequence, 437 residues long: Aspartate aminotransferase, mitochondrial (437 aa).

Residues Gly-72, Trp-167, and Asn-220 each contribute to the L-aspartate site. N6-(pyridoxal phosphate)lysine is present on Lys-284. Arg-413 is an L-aspartate binding site.

The protein belongs to the class-I pyridoxal-phosphate-dependent aminotransferase family. As to quaternary structure, homodimer. It depends on pyridoxal 5'-phosphate as a cofactor.

The protein resides in the mitochondrion matrix. It catalyses the reaction L-aspartate + 2-oxoglutarate = oxaloacetate + L-glutamate. Functionally, plays a key role in amino acid metabolism. Important for metabolite exchange between mitochondria and cytosol. The protein is Aspartate aminotransferase, mitochondrial of Schizosaccharomyces pombe (strain 972 / ATCC 24843) (Fission yeast).